Here is a 203-residue protein sequence, read N- to C-terminus: ATP-dependent Clp protease proteolytic subunit 2 (203 aa).

Residue Ser98 is the Nucleophile of the active site. His123 is a catalytic residue.

It belongs to the peptidase S14 family. In terms of assembly, fourteen ClpP subunits assemble into 2 heptameric rings which stack back to back to give a disk-like structure with a central cavity, resembling the structure of eukaryotic proteasomes.

The protein resides in the cytoplasm. It carries out the reaction Hydrolysis of proteins to small peptides in the presence of ATP and magnesium. alpha-casein is the usual test substrate. In the absence of ATP, only oligopeptides shorter than five residues are hydrolyzed (such as succinyl-Leu-Tyr-|-NHMec, and Leu-Tyr-Leu-|-Tyr-Trp, in which cleavage of the -Tyr-|-Leu- and -Tyr-|-Trp bonds also occurs).. In terms of biological role, cleaves peptides in various proteins in a process that requires ATP hydrolysis. Has a chymotrypsin-like activity. Plays a major role in the degradation of misfolded proteins. This Chlamydia pneumoniae (Chlamydophila pneumoniae) protein is ATP-dependent Clp protease proteolytic subunit 2.